The following is a 95-amino-acid chain: Protein TusB (95 aa).

This sequence belongs to the DsrH/TusB family. Heterohexamer, formed by a dimer of trimers. The hexameric TusBCD complex contains 2 copies each of TusB, TusC and TusD. The TusBCD complex interacts with TusE.

It localises to the cytoplasm. Part of a sulfur-relay system required for 2-thiolation of 5-methylaminomethyl-2-thiouridine (mnm(5)s(2)U) at tRNA wobble positions. This chain is Protein TusB, found in Klebsiella pneumoniae (strain 342).